A 367-amino-acid polypeptide reads, in one-letter code: Probable alcohol dehydrogenase adh (367 aa).

7 residues coordinate Zn(2+): C43, H64, C97, C100, C103, C111, and N163.

It belongs to the zinc-containing alcohol dehydrogenase family. It depends on Zn(2+) as a cofactor.

It carries out the reaction a primary alcohol + NAD(+) = an aldehyde + NADH + H(+). The catalysed reaction is a secondary alcohol + NAD(+) = a ketone + NADH + H(+). In Mycobacterium tuberculosis (strain CDC 1551 / Oshkosh), this protein is Probable alcohol dehydrogenase adh (adh).